Here is a 38-residue protein sequence, read N- to C-terminus: Photosystem II reaction center protein L (38 aa).

A helical membrane pass occupies residues 17-37 (SLYWGLLLIFVLAILFSSYIF).

The protein belongs to the PsbL family. In terms of assembly, PSII is composed of 1 copy each of membrane proteins PsbA, PsbB, PsbC, PsbD, PsbE, PsbF, PsbH, PsbI, PsbJ, PsbK, PsbL, PsbM, PsbT, PsbX, PsbY, PsbZ, Psb30/Ycf12, at least 3 peripheral proteins of the oxygen-evolving complex and a large number of cofactors. It forms dimeric complexes.

Its subcellular location is the plastid. It localises to the chloroplast thylakoid membrane. In terms of biological role, one of the components of the core complex of photosystem II (PSII). PSII is a light-driven water:plastoquinone oxidoreductase that uses light energy to abstract electrons from H(2)O, generating O(2) and a proton gradient subsequently used for ATP formation. It consists of a core antenna complex that captures photons, and an electron transfer chain that converts photonic excitation into a charge separation. This subunit is found at the monomer-monomer interface and is required for correct PSII assembly and/or dimerization. In Mesostigma viride (Green alga), this protein is Photosystem II reaction center protein L.